Consider the following 266-residue polypeptide: Agamous-like MADS-box protein AGL97 (266 aa).

An MADS-box domain is found at 3-63 (GVKRKIAIEK…SNSNAAFYSF (61 aa)). The stretch at 88-130 (WEDESLLKSENLEELREAMDSMSTMLRDLKELEKQRDHQTQTL) forms a coiled coil.

In terms of assembly, interacts with AGL27 and AGL62.

The protein localises to the nucleus. Its function is as follows. Putative transcription factor. The protein is Agamous-like MADS-box protein AGL97 (AGL97) of Arabidopsis thaliana (Mouse-ear cress).